The primary structure comprises 201 residues: 3-isopropylmalate dehydratase small subunit (201 aa).

Belongs to the LeuD family. LeuD type 1 subfamily. In terms of assembly, heterodimer of LeuC and LeuD.

The catalysed reaction is (2R,3S)-3-isopropylmalate = (2S)-2-isopropylmalate. The protein operates within amino-acid biosynthesis; L-leucine biosynthesis; L-leucine from 3-methyl-2-oxobutanoate: step 2/4. Functionally, catalyzes the isomerization between 2-isopropylmalate and 3-isopropylmalate, via the formation of 2-isopropylmaleate. The sequence is that of 3-isopropylmalate dehydratase small subunit from Cronobacter sakazakii (strain ATCC BAA-894) (Enterobacter sakazakii).